The following is a 128-amino-acid chain: UPF0325 protein CKO_03204 (128 aa).

This sequence belongs to the UPF0325 family.

This Citrobacter koseri (strain ATCC BAA-895 / CDC 4225-83 / SGSC4696) protein is UPF0325 protein CKO_03204.